A 266-amino-acid polypeptide reads, in one-letter code: 3-methyl-2-oxobutanoate hydroxymethyltransferase (266 aa).

Residues D45 and D84 each contribute to the Mg(2+) site. 3-methyl-2-oxobutanoate contacts are provided by residues 45 to 46, D84, and K112; that span reads DS. E114 serves as a coordination point for Mg(2+). The active-site Proton acceptor is E181.

The protein belongs to the PanB family. In terms of assembly, homodecamer; pentamer of dimers. Requires Mg(2+) as cofactor.

Its subcellular location is the cytoplasm. It catalyses the reaction 3-methyl-2-oxobutanoate + (6R)-5,10-methylene-5,6,7,8-tetrahydrofolate + H2O = 2-dehydropantoate + (6S)-5,6,7,8-tetrahydrofolate. It functions in the pathway cofactor biosynthesis; (R)-pantothenate biosynthesis; (R)-pantoate from 3-methyl-2-oxobutanoate: step 1/2. Its function is as follows. Catalyzes the reversible reaction in which hydroxymethyl group from 5,10-methylenetetrahydrofolate is transferred onto alpha-ketoisovalerate to form ketopantoate. The protein is 3-methyl-2-oxobutanoate hydroxymethyltransferase of Pseudomonas fluorescens (strain Pf0-1).